Reading from the N-terminus, the 272-residue chain is 3-methyl-2-oxobutanoate hydroxymethyltransferase (272 aa).

2 residues coordinate Mg(2+): Asp43 and Asp82. 3-methyl-2-oxobutanoate-binding positions include Asp43–Ser44, Asp82, and Lys112. Glu114 serves as a coordination point for Mg(2+). Glu179 serves as the catalytic Proton acceptor.

Belongs to the PanB family. Homodecamer; pentamer of dimers. It depends on Mg(2+) as a cofactor.

The protein localises to the cytoplasm. The enzyme catalyses 3-methyl-2-oxobutanoate + (6R)-5,10-methylene-5,6,7,8-tetrahydrofolate + H2O = 2-dehydropantoate + (6S)-5,6,7,8-tetrahydrofolate. The protein operates within cofactor biosynthesis; (R)-pantothenate biosynthesis; (R)-pantoate from 3-methyl-2-oxobutanoate: step 1/2. Functionally, catalyzes the reversible reaction in which hydroxymethyl group from 5,10-methylenetetrahydrofolate is transferred onto alpha-ketoisovalerate to form ketopantoate. The polypeptide is 3-methyl-2-oxobutanoate hydroxymethyltransferase (Staphylococcus aureus (strain MRSA252)).